A 151-amino-acid polypeptide reads, in one-letter code: Large ribosomal subunit protein uL22c (151 aa).

This sequence belongs to the universal ribosomal protein uL22 family. Part of the 50S ribosomal subunit.

The protein resides in the plastid. It is found in the chloroplast. Its function is as follows. This protein binds specifically to 23S rRNA. Functionally, the globular domain of the protein is located near the polypeptide exit tunnel on the outside of the subunit, while an extended beta-hairpin is found that lines the wall of the exit tunnel in the center of the 70S ribosome. The protein is Large ribosomal subunit protein uL22c (rpl22) of Gossypium barbadense (Sea Island cotton).